A 296-amino-acid chain; its full sequence is Probable endonuclease 4 (296 aa).

Zn(2+) is bound by residues histidine 68, histidine 109, glutamate 144, aspartate 178, histidine 181, histidine 213, aspartate 226, histidine 228, and glutamate 258.

The protein belongs to the AP endonuclease 2 family. The cofactor is Zn(2+).

It carries out the reaction Endonucleolytic cleavage to 5'-phosphooligonucleotide end-products.. In terms of biological role, endonuclease IV plays a role in DNA repair. It cleaves phosphodiester bonds at apurinic or apyrimidinic (AP) sites, generating a 3'-hydroxyl group and a 5'-terminal sugar phosphate. The sequence is that of Probable endonuclease 4 from Staphylococcus aureus (strain Mu3 / ATCC 700698).